Reading from the N-terminus, the 1576-residue chain is Protein Shroom (1576 aa).

Disordered regions lie at residues 1–31 (MKMR…ENNN), 46–100 (SNGA…TQAG), 112–142 (YDQT…DSTS), 187–244 (RQSH…SSTE), 267–434 (ISES…ISVT), 589–609 (VERQ…HSQS), and 621–660 (PNNL…SLLP). The segment covering 10 to 21 (GNGSEMGESTKS) has biased composition (polar residues). 3 stretches are compositionally biased toward low complexity: residues 46 to 69 (SNGA…AGSV), 76 to 91 (HNSS…GSSL), and 128 to 142 (SEGY…DSTS). Positions 189 to 211 (SHSHSHSHAHSHSNSHGHSHGHA) are enriched in basic residues. 2 stretches are compositionally biased toward low complexity: residues 212-244 (HSAS…SSTE) and 267-283 (ISES…SSRV). Residues 305–317 (DSSPTASNSSQMM) are compositionally biased toward polar residues. The span at 376 to 388 (QSTLSTQSSLLEL) shows a compositional bias: low complexity. Polar residues predominate over residues 399–415 (MGQSHSMGDLQQKNPHQ). The residue at position 404 (serine 404) is a Phosphoserine. The interval 445–920 (APQPPAGKPS…LESNQQKRSN (476 aa)) is F-actin binding region required for planar polarity and cortical localization. The span at 633–643 (TGSNSASTRDC) shows a compositional bias: polar residues. Serine 667 and serine 668 each carry phosphoserine. 7 disordered regions span residues 699–728 (ISFN…SSAT), 743–823 (AALA…NCFA), 849–876 (VPKK…HHAT), 910–939 (NLES…NTDP), 1036–1055 (GYGK…SQSY), 1091–1116 (PTAT…SHSD), and 1210–1244 (SFAN…DVHD). Positions 748-759 (QQHHPQQHRHAQ) are enriched in basic residues. Residues 798–816 (PLPPPPPPEVLQPRPPPSP) are compositionally biased toward pro residues. Polar residues-rich tracts occupy residues 910–923 (NLES…NSKA) and 1042–1055 (KPVT…SQSY). Composition is skewed to pro residues over residues 1094–1108 (TPTP…PPRL) and 1217–1229 (MTPP…PPPL). The span at 1230–1239 (EPEEEEEQEE) shows a compositional bias: acidic residues. The stretch at 1232-1296 (EEEEEQEEND…LEAAREEHQT (65 aa)) forms a coiled coil. Residues 1305 to 1572 (RQPIELDYEQ…QLSSLSDALV (268 aa)) form the ASD2 domain.

The protein belongs to the shroom family. As to quaternary structure, monomer or homodimer. Interacts with Rok. Binds (via N-terminus) to F-actin.

Its subcellular location is the cell junction. The protein resides in the adherens junction. It localises to the cytoplasm. The protein localises to the cytoskeleton. It is found in the apical cell membrane. Its function is as follows. Binds to Rho-kinase Rok and targets it to the apical cell cortex where it mediates apical constriction. During embryogenic axis elongation, required for the localization to adherens junctions and the establishment of planar polarization of both Rho-kinase Rok and myosin regulatory light chain sqh. May be involved in the assembly of microtubule arrays during cell elongation. This chain is Protein Shroom, found in Drosophila melanogaster (Fruit fly).